A 142-amino-acid chain; its full sequence is Transcriptional regulator MraZ (142 aa).

2 consecutive SpoVT-AbrB domains span residues 5–51 (ASAL…PRPE) and 77–120 (AADV…DAAT).

Belongs to the MraZ family. In terms of assembly, forms oligomers.

It is found in the cytoplasm. It localises to the nucleoid. The protein is Transcriptional regulator MraZ of Cupriavidus pinatubonensis (strain JMP 134 / LMG 1197) (Cupriavidus necator (strain JMP 134)).